The following is a 215-amino-acid chain: Nascent polypeptide-associated complex subunit alpha (215 aa).

Positions 1–81 (MPGEATETVP…SEKKARKAMS (81 aa)) are disordered. Residues 9 to 28 (VPATEQELPQPQAETGSGTE) are compositionally biased toward polar residues. The segment covering 29-42 (SDSDESVPELEEQD) has biased composition (acidic residues). Residue serine 43 is modified to Phosphoserine; by ILK1. A compositionally biased stretch (low complexity) spans 44-57 (TQATTQQAQLAAAA). The tract at residues 69–80 (QSRSEKKARKAM) is required for DNA-binding. The 66-residue stretch at 70–135 (SRSEKKARKA…AKIEDLSQQA (66 aa)) folds into the NAC-A/B domain. Residues 93 to 108 (RVTIRKSKNILFVITK) are RNA/DNA-binding. Position 132 is a phosphoserine (serine 132). Lysine 142 carries the post-translational modification N6-acetyllysine; alternate. Lysine 142 participates in a covalent cross-link: Glycyl lysine isopeptide (Lys-Gly) (interchain with G-Cter in SUMO2); alternate. Position 159 is a phosphothreonine; by GSK3-beta (threonine 159). Threonine 161 is modified (phosphothreonine). Phosphoserine is present on residues serine 166, serine 186, serine 191, and serine 203. One can recognise a UBA domain in the interval 176-213 (VEVKDIELVMSQANVSRAKAVRALKNNSNDIVNAIMEL).

This sequence belongs to the NAC-alpha family. In terms of assembly, interacts with TBP and JUN. Part of the nascent polypeptide-associated complex (NAC), which is a heterodimer of NACA and BTF3 (via NAC-A/B domains). NAC associates with ribosomes through the BTF3/NACB subunit and contacts the ribosomal protein L23, which is positioned near the exiting site. Both subunits can contact nascent polypeptide chains. NACA may also form homodimers, and only this form binds DNA. Post-translationally, phosphorylation of Thr-159 by GSK3B may promote proteasome mediated degradation. Phosphorylation of Ser-43 by ILK during cell adhesion may promote nuclear localization. Ubiquitously expressed.

The protein localises to the cytoplasm. Its subcellular location is the nucleus. Its function is as follows. Prevents inappropriate targeting of non-secretory polypeptides to the endoplasmic reticulum (ER). Binds to nascent polypeptide chains as they emerge from the ribosome and blocks their interaction with the signal recognition particle (SRP), which normally targets nascent secretory peptides to the ER. Also reduces the inherent affinity of ribosomes for protein translocation sites in the ER membrane (M sites). May act as a specific coactivator for JUN, binding to DNA and stabilizing the interaction of JUN homodimers with target gene promoters. This chain is Nascent polypeptide-associated complex subunit alpha (NACA), found in Homo sapiens (Human).